The primary structure comprises 154 residues: 6,7-dimethyl-8-ribityllumazine synthase (154 aa).

Residues phenylalanine 22, 56–58, and 80–82 contribute to the 5-amino-6-(D-ribitylamino)uracil site; these read AFE and AVI. 85–86 is a (2S)-2-hydroxy-3-oxobutyl phosphate binding site; that stretch reads AT. Histidine 88 serves as the catalytic Proton donor. Phenylalanine 113 is a 5-amino-6-(D-ribitylamino)uracil binding site. Position 127 (arginine 127) interacts with (2S)-2-hydroxy-3-oxobutyl phosphate.

Belongs to the DMRL synthase family.

It carries out the reaction (2S)-2-hydroxy-3-oxobutyl phosphate + 5-amino-6-(D-ribitylamino)uracil = 6,7-dimethyl-8-(1-D-ribityl)lumazine + phosphate + 2 H2O + H(+). Its pathway is cofactor biosynthesis; riboflavin biosynthesis; riboflavin from 2-hydroxy-3-oxobutyl phosphate and 5-amino-6-(D-ribitylamino)uracil: step 1/2. Its function is as follows. Catalyzes the formation of 6,7-dimethyl-8-ribityllumazine by condensation of 5-amino-6-(D-ribitylamino)uracil with 3,4-dihydroxy-2-butanone 4-phosphate. This is the penultimate step in the biosynthesis of riboflavin. The polypeptide is 6,7-dimethyl-8-ribityllumazine synthase (Agathobacter rectalis (strain ATCC 33656 / DSM 3377 / JCM 17463 / KCTC 5835 / VPI 0990) (Eubacterium rectale)).